The sequence spans 206 residues: Molybdopterin synthase catalytic subunit (206 aa).

A compositionally biased stretch (polar residues) spans 1 to 23; it reads MATQQPTQTDNSAQAQPPQTNPA. The disordered stretch occupies residues 1 to 27; it reads MATQQPTQTDNSAQAQPPQTNPAKPTE. Substrate-binding positions include 131–132, Lys-147, and 154–156; these read HR and KRE. Basic and acidic residues predominate over residues 177–188; sequence KVDEPRIGKGEV. Residues 177–206 form a disordered region; it reads KVDEPRIGKGEVDEKEDEGDSGNGGNDRKS. Gly residues predominate over residues 197-206; that stretch reads SGNGGNDRKS.

The protein belongs to the MoaE family. MOCS2B subfamily. Heterotetramer; composed of 2 small (MOCS2A) and 2 large (MOCS2B) subunits.

The protein localises to the cytoplasm. It catalyses the reaction 2 [molybdopterin-synthase sulfur-carrier protein]-C-terminal-Gly-aminoethanethioate + cyclic pyranopterin phosphate + H2O = molybdopterin + 2 [molybdopterin-synthase sulfur-carrier protein]-C-terminal Gly-Gly + 2 H(+). It functions in the pathway cofactor biosynthesis; molybdopterin biosynthesis. Catalytic subunit of the molybdopterin synthase complex, a complex that catalyzes the conversion of precursor Z into molybdopterin. Acts by mediating the incorporation of 2 sulfur atoms from thiocarboxylated MOCS2A into precursor Z to generate a dithiolene group. The protein is Molybdopterin synthase catalytic subunit (nit-8) of Neurospora crassa (strain ATCC 24698 / 74-OR23-1A / CBS 708.71 / DSM 1257 / FGSC 987).